The sequence spans 183 residues: Translocon-associated protein subunit beta (183 aa).

The signal sequence occupies residues 1–17 (MRLLAFAVLALFAVTQA). Topologically, residues 18 to 146 (EEGARLLASK…REFDRRFSPH (129 aa)) are lumenal. The N-linked (GlcNAc...) asparagine glycan is linked to N88. The chain crosses the membrane as a helical span at residues 147-167 (FLDWAAFGVMTLPSIGVPLLL). Residues 168-183 (WYSSKRKYDTPKTKKN) are Cytoplasmic-facing.

It belongs to the TRAP-beta family. Heterotetramer of TRAP-alpha, TRAP-beta, TRAP-delta and TRAP-gamma. Interacts with STING1.

The protein resides in the endoplasmic reticulum membrane. Functionally, TRAP proteins are part of a complex whose function is to bind calcium to the ER membrane and thereby regulate the retention of ER resident proteins. The polypeptide is Translocon-associated protein subunit beta (SSR2) (Bos taurus (Bovine)).